The chain runs to 356 residues: Protein RecA (356 aa).

ATP is bound at residue 67–74 (GPESSGKT).

The protein belongs to the RecA family.

The protein resides in the cytoplasm. Its function is as follows. Can catalyze the hydrolysis of ATP in the presence of single-stranded DNA, the ATP-dependent uptake of single-stranded DNA by duplex DNA, and the ATP-dependent hybridization of homologous single-stranded DNAs. It interacts with LexA causing its activation and leading to its autocatalytic cleavage. This chain is Protein RecA, found in Yersinia pestis (strain Pestoides F).